A 329-amino-acid polypeptide reads, in one-letter code: UDP-2,3-diacylglucosamine pyrophosphatase LpxG (329 aa).

A helical membrane pass occupies residues 2 to 24; the sequence is FVSVGITASLTTILAAPVLTWVW. A divalent metal cation is bound by residues Asp59, His61, Asp91, Asn123, His257, and His259.

This sequence belongs to the metallophosphoesterase superfamily. LpxG family. Requires Mn(2+) as cofactor.

It localises to the cell inner membrane. It carries out the reaction UDP-2,3-diacyl-alpha-D-glucosamine + H2O = 2,3-diacyl-alpha-D-glucosaminyl 1-phosphate + UMP + 2 H(+). It participates in glycolipid biosynthesis; lipid IV(A) biosynthesis. Functionally, hydrolyzes the pyrophosphate bond of UDP-2,3-diacylglucosamine to form 2,3-diacylglucosamine 1-phosphate (lipid X) and UMP by catalyzing the attack of water at the alpha-P atom. Involved in the biosynthesis of lipid A, a phosphorylated glycolipid that anchors the lipooligosaccharide (LOS) to the outer membrane of the cell. Can functionally complement lpxH deficiency in E.coli. Overexpression of LpxG results in toxic accumulation of lipid X and profoundly reduces the infectivity of C.trachomatis. Can utilize UDP-2-N,3-O-bis((3R)-3-hydroxytetradecanoyl)-alpha-D-glucosamine as substrate in vitro, but the substrate is likely UDP-2-N-((3R)-3-hydroxyicosanoyl),3-O-(tetradecanoyl)-alpha-D-glucosamine in vivo. This chain is UDP-2,3-diacylglucosamine pyrophosphatase LpxG, found in Chlamydia trachomatis serovar D (strain ATCC VR-885 / DSM 19411 / UW-3/Cx).